Here is a 309-residue protein sequence, read N- to C-terminus: tRNA pseudouridine synthase B (309 aa).

Residue Asp52 is the Nucleophile of the active site.

It belongs to the pseudouridine synthase TruB family. Type 1 subfamily.

It carries out the reaction uridine(55) in tRNA = pseudouridine(55) in tRNA. Responsible for synthesis of pseudouridine from uracil-55 in the psi GC loop of transfer RNAs. The sequence is that of tRNA pseudouridine synthase B from Leptospira interrogans serogroup Icterohaemorrhagiae serovar Lai (strain 56601).